The sequence spans 864 residues: Leucine--tRNA ligase (864 aa).

Positions Pro-42–His-52 match the 'HIGH' region motif. A 'KMSKS' region motif is present at residues Lys-624 to Ser-628. Residue Lys-627 participates in ATP binding.

Belongs to the class-I aminoacyl-tRNA synthetase family.

It is found in the cytoplasm. It carries out the reaction tRNA(Leu) + L-leucine + ATP = L-leucyl-tRNA(Leu) + AMP + diphosphate. The sequence is that of Leucine--tRNA ligase from Burkholderia pseudomallei (strain 668).